We begin with the raw amino-acid sequence, 414 residues long: Probable acetyl-CoA acetyltransferase (414 aa).

The Acyl-thioester intermediate role is filled by Cys-110. CoA-binding positions include Tyr-205, 244–246, and Lys-249; that span reads KVL. Tyr-205 contacts K(+). K(+) contacts are provided by Ala-266 and Ala-268. Ser-269 is a CoA binding site. Val-366 serves as a coordination point for K(+). Catalysis depends on proton acceptor residues His-370 and Cys-400.

Belongs to the thiolase-like superfamily. Thiolase family.

It catalyses the reaction 2 acetyl-CoA = acetoacetyl-CoA + CoA. The sequence is that of Probable acetyl-CoA acetyltransferase from Dictyostelium discoideum (Social amoeba).